The chain runs to 726 residues: WD repeat and coiled-coil-containing protein (726 aa).

2 WD repeats span residues 55-98 (GQFE…LDKN) and 154-194 (KSSG…LNAC). Positions 503–571 (SYDGDQSPTS…SSPPNFIKHG (69 aa)) are disordered. The span at 506 to 515 (GDQSPTSSAN) shows a compositional bias: polar residues. Positions 517 to 535 (FDDKRSKLRVESLDTEPKN) are enriched in basic and acidic residues. Residues 550 to 565 (SRPTSPKSECQKSSPP) are compositionally biased toward polar residues. The stretch at 581–609 (SISRNVERLCCNFAHLQQHLSELTDITRN) forms a coiled coil.

This is WD repeat and coiled-coil-containing protein (wdcp) from Xenopus tropicalis (Western clawed frog).